A 478-amino-acid polypeptide reads, in one-letter code: Ribosomal RNA small subunit methyltransferase F (478 aa).

S-adenosyl-L-methionine contacts are provided by residues 123–129, E147, D174, and D192; that span reads AAAPGSK. The Nucleophile role is filled by C245.

It belongs to the class I-like SAM-binding methyltransferase superfamily. RsmB/NOP family.

It localises to the cytoplasm. The catalysed reaction is cytidine(1407) in 16S rRNA + S-adenosyl-L-methionine = 5-methylcytidine(1407) in 16S rRNA + S-adenosyl-L-homocysteine + H(+). Functionally, specifically methylates the cytosine at position 1407 (m5C1407) of 16S rRNA. The polypeptide is Ribosomal RNA small subunit methyltransferase F (Vibrio campbellii (strain ATCC BAA-1116)).